A 23-amino-acid chain; its full sequence is Phospholipase A2 homolog 4 (23 aa).

This sequence belongs to the phospholipase A2 family. Group II subfamily. K49 sub-subfamily. As to quaternary structure, homodimer; non-covalently linked (probable alternative/compact dimer conformation in solution). As to expression, expressed by the venom gland.

It localises to the secreted. In terms of biological role, snake venom phospholipase A2 homolog that lacks enzymatic activity. Induces acute muscle damage after intramuscular injection in mice and disrupts negatively charged liposomes but not positively charged ones. Also exerts a weak anticoagulant effect only at concentrations of 40 ug/ml or higher. A model of myotoxic mechanism has been proposed: an apo Lys49-PLA2 is activated by the entrance of a hydrophobic molecule (e.g. fatty acid) at the hydrophobic channel of the protein leading to a reorientation of a monomer. This reorientation causes a transition between 'inactive' to 'active' states, causing alignment of C-terminal and membrane-docking sites (MDoS) side-by-side and putting the membrane-disruption sites (MDiS) in the same plane, exposed to solvent and in a symmetric position for both monomers. The MDoS region stabilizes the toxin on membrane by the interaction of charged residues with phospholipid head groups. Subsequently, the MDiS region destabilizes the membrane with penetration of hydrophobic residues. This insertion causes a disorganization of the membrane, allowing an uncontrolled influx of ions (i.e. calcium and sodium), and eventually triggering irreversible intracellular alterations and cell death. In Bothrops asper (Terciopelo), this protein is Phospholipase A2 homolog 4.